Reading from the N-terminus, the 496-residue chain is Proline--tRNA ligase (496 aa).

The protein belongs to the class-II aminoacyl-tRNA synthetase family. ProS type 3 subfamily. Homodimer.

Its subcellular location is the cytoplasm. The enzyme catalyses tRNA(Pro) + L-proline + ATP = L-prolyl-tRNA(Pro) + AMP + diphosphate. In terms of biological role, catalyzes the attachment of proline to tRNA(Pro) in a two-step reaction: proline is first activated by ATP to form Pro-AMP and then transferred to the acceptor end of tRNA(Pro). This chain is Proline--tRNA ligase, found in Phocaeicola vulgatus (strain ATCC 8482 / DSM 1447 / JCM 5826 / CCUG 4940 / NBRC 14291 / NCTC 11154) (Bacteroides vulgatus).